Consider the following 399-residue polypeptide: Phosphoglycerate kinase (399 aa).

Residues 22 to 24 (DFN), Arg38, 61 to 64 (HLGR), Arg120, and Arg153 contribute to the substrate site. Residues Lys204, Glu326, and 352–355 (GGDT) contribute to the ATP site.

The protein belongs to the phosphoglycerate kinase family. Monomer.

It is found in the cytoplasm. It catalyses the reaction (2R)-3-phosphoglycerate + ATP = (2R)-3-phospho-glyceroyl phosphate + ADP. The protein operates within carbohydrate degradation; glycolysis; pyruvate from D-glyceraldehyde 3-phosphate: step 2/5. The polypeptide is Phosphoglycerate kinase (Pelobacter propionicus (strain DSM 2379 / NBRC 103807 / OttBd1)).